A 213-amino-acid chain; its full sequence is N-(5'-phosphoribosyl)anthranilate isomerase (213 aa).

It belongs to the TrpF family.

It carries out the reaction N-(5-phospho-beta-D-ribosyl)anthranilate = 1-(2-carboxyphenylamino)-1-deoxy-D-ribulose 5-phosphate. Its pathway is amino-acid biosynthesis; L-tryptophan biosynthesis; L-tryptophan from chorismate: step 3/5. This Caulobacter sp. (strain K31) protein is N-(5'-phosphoribosyl)anthranilate isomerase.